Consider the following 629-residue polypeptide: tRNA uridine 5-carboxymethylaminomethyl modification enzyme MnmG (629 aa).

Residues 13–18 (GGGHAG), V125, and S180 each bind FAD. 273–287 (GPRYCPSIEDKVMRF) contacts NAD(+). FAD is bound at residue Q370.

It belongs to the MnmG family. As to quaternary structure, homodimer. Heterotetramer of two MnmE and two MnmG subunits. Requires FAD as cofactor.

The protein localises to the cytoplasm. Functionally, NAD-binding protein involved in the addition of a carboxymethylaminomethyl (cmnm) group at the wobble position (U34) of certain tRNAs, forming tRNA-cmnm(5)s(2)U34. In Enterobacter sp. (strain 638), this protein is tRNA uridine 5-carboxymethylaminomethyl modification enzyme MnmG.